Consider the following 365-residue polypeptide: Phospho-N-acetylmuramoyl-pentapeptide-transferase (365 aa).

A run of 10 helical transmembrane segments spans residues 3-23 (HIIIGGAVSFIIAILFTPILI), 54-74 (GIAIIVAIVGGYFLAHLASVF), 81-101 (PTASGLLVLGLTVGMGFLGFL), 119-139 (GKLLGQAVLAIGFGVLCLLFL), 162-182 (IAIGGGIIGTLIFLLFIYILV), 198-218 (LAAGTTAIVMAAYSIMTFWQF), 239-259 (LSILAACGLGACLGFLWWNAA), 263-283 (IFMGDTGSLALGGLVAGLSVT), 289-309 (LMIVIGALFVAETISVVIQVV), and 342-362 (FWLLTAMFAVAGVSMFYADWL).

Belongs to the glycosyltransferase 4 family. MraY subfamily. Mg(2+) is required as a cofactor.

It localises to the cell membrane. The enzyme catalyses UDP-N-acetyl-alpha-D-muramoyl-L-alanyl-gamma-D-glutamyl-meso-2,6-diaminopimeloyl-D-alanyl-D-alanine + di-trans,octa-cis-undecaprenyl phosphate = di-trans,octa-cis-undecaprenyl diphospho-N-acetyl-alpha-D-muramoyl-L-alanyl-D-glutamyl-meso-2,6-diaminopimeloyl-D-alanyl-D-alanine + UMP. Its pathway is cell wall biogenesis; peptidoglycan biosynthesis. Catalyzes the initial step of the lipid cycle reactions in the biosynthesis of the cell wall peptidoglycan: transfers peptidoglycan precursor phospho-MurNAc-pentapeptide from UDP-MurNAc-pentapeptide onto the lipid carrier undecaprenyl phosphate, yielding undecaprenyl-pyrophosphoryl-MurNAc-pentapeptide, known as lipid I. This is Phospho-N-acetylmuramoyl-pentapeptide-transferase from Corynebacterium kroppenstedtii (strain DSM 44385 / JCM 11950 / CIP 105744 / CCUG 35717).